The following is a 236-amino-acid chain: Probable transcriptional activator protein TraR (236 aa).

The HTH luxR-type domain occupies 169–234; sequence VLNPKQMLSP…QLVAIAKDRG (66 aa). The segment at residues 193-212 is a DNA-binding region (H-T-H motif); sequence ASVTANLTGINARTVQHYLD.

This sequence belongs to the autoinducer-regulated transcriptional regulatory protein family.

Functionally, positive regulation of conjugal transfer. TraR activates target genes in the presence of AAI and also activates traR and traI themselves. In Sinorhizobium fredii (strain NBRC 101917 / NGR234), this protein is Probable transcriptional activator protein TraR (traR).